Consider the following 87-residue polypeptide: Translation initiation factor IF-1 2 (87 aa).

The region spanning 1–72 is the S1-like domain; that stretch reads MAADDHIEME…TKGRIARRTT (72 aa). Residues 65–87 are disordered; it reads GRIARRTTTPSGGPRPARSGNRR.

Belongs to the IF-1 family. Component of the 30S ribosomal translation pre-initiation complex which assembles on the 30S ribosome in the order IF-2 and IF-3, IF-1 and N-formylmethionyl-tRNA(fMet); mRNA recruitment can occur at any time during PIC assembly.

It is found in the cytoplasm. One of the essential components for the initiation of protein synthesis. Stabilizes the binding of IF-2 and IF-3 on the 30S subunit to which N-formylmethionyl-tRNA(fMet) subsequently binds. Helps modulate mRNA selection, yielding the 30S pre-initiation complex (PIC). Upon addition of the 50S ribosomal subunit IF-1, IF-2 and IF-3 are released leaving the mature 70S translation initiation complex. The chain is Translation initiation factor IF-1 2 from Nitratidesulfovibrio vulgaris (strain ATCC 29579 / DSM 644 / CCUG 34227 / NCIMB 8303 / VKM B-1760 / Hildenborough) (Desulfovibrio vulgaris).